Reading from the N-terminus, the 541-residue chain is Eukaryotic translation initiation factor 3 subunit L (541 aa).

Positions 308–516 (TFSDILLYIQ…IHIADTKVSH (209 aa)) constitute a PCI domain.

Belongs to the eIF-3 subunit L family. Component of the eukaryotic translation initiation factor 3 (eIF-3) complex. The eIF-3 complex interacts with pix.

The protein resides in the cytoplasm. Component of the eukaryotic translation initiation factor 3 (eIF-3) complex, which is involved in protein synthesis of a specialized repertoire of mRNAs and, together with other initiation factors, stimulates binding of mRNA and methionyl-tRNAi to the 40S ribosome. The eIF-3 complex specifically targets and initiates translation of a subset of mRNAs involved in cell proliferation. In Drosophila pseudoobscura pseudoobscura (Fruit fly), this protein is Eukaryotic translation initiation factor 3 subunit L.